We begin with the raw amino-acid sequence, 448 residues long: Probable ribonuclease FAU-1 (448 aa).

This sequence belongs to the FAU-1 family.

In terms of biological role, probable RNase involved in rRNA stability through maturation and/or degradation of precursor rRNAs. Binds to RNA in loop regions with AU-rich sequences. The protein is Probable ribonuclease FAU-1 of Pyrobaculum calidifontis (strain DSM 21063 / JCM 11548 / VA1).